The following is a 759-amino-acid chain: Solute carrier family 26 member 6 (759 aa).

Topologically, residues 1 to 115 (MGLADASGPR…PQGLAYALLA (115 aa)) are cytoplasmic. A helical membrane pass occupies residues 116–136 (GLPPVFGLYSSFYPVFIYFLF). Over 137–186 (GTSRHISVGTFAVMSVMVGSVTESLAPQALNDSMINETARDAARVQVAST) the chain is Extracellular. N-linked (GlcNAc) asparagine glycans are attached at residues N167 and N172. Residues 187-207 (LSVLVGLFQVGLGLIHFGFVV) form a helical membrane-spanning segment. Residues 208 to 263 (TYLSEPLVRGYTTAAAVQVFVSQLKYVFGLHLSSHSGPLSLIYTVLEVCWKLPQSK) are Cytoplasmic-facing. A helical membrane pass occupies residues 264–284 (VGTVVTAAVAGVVLVVVKLLN). The Extracellular portion of the chain corresponds to 285 to 293 (DKLQQQLPM). A helical transmembrane segment spans residues 294–314 (PIPGELLTLIGATGISYGMGL). The Cytoplasmic portion of the chain corresponds to 315 to 347 (KHRFEVDVVGNIPAGLVPPVAPNTQLFSKLVGS). Residues 348-368 (AFTIAVVGFAIAISLGKIFAL) traverse the membrane as a helical segment. Residues 369–379 (RHGYRVDSNQE) are Extracellular-facing. A helical membrane pass occupies residues 380–400 (LVALGLSNLIGGIFQCFPVSC). At 401–416 (SMSRSLVQESTGGNSQ) the chain is on the cytoplasmic side. A helical membrane pass occupies residues 417-437 (VAGAISSLFILLIIVKLGELF). Residues 438–484 (HDLPKAVLAAIIIVNLKGMLRQLSDMRSLWKANRADLLIWLVTFTAT) are Extracellular-facing. A helical transmembrane segment spans residues 485–505 (ILLNLDLGLVVAVIFSLLLVV). Topologically, residues 506–759 (VRTQMPHYSV…PDSPVSVTRL (254 aa)) are cytoplasmic. Residues 530–742 (EYSEAKEVRG…ASVHDAVTFA (213 aa)) form the STAS domain. 2 positions are modified to phosphoserine; by PKC: N553 and K582. The residue at position 616 (S616) is a Phosphoserine. The tract at residues 636–657 (GDKMEDATANGQEDSKAPDGST) is disordered. 2 positions are modified to phosphoserine: S752 and S755.

This sequence belongs to the SLC26A/SulP transporter (TC 2.A.53) family. As to quaternary structure, interacts (via C-terminal domain) with PDZK1 (via C-terminal PDZ domain); the interaction induces chloride and oxalate exchange transport. Interacts with CFTR and SLC26A3. Interacts with AHCYL1; the interaction increases SLC26A6 activity. Interacts with NHERF1 (via the PDZ domains) and NHERF2 (via the PDZ domains). Interacts (via C-terminal cytoplasmic domain) with CA2; the interaction stimulates chloride-bicarbonate exchange activity. In terms of assembly, interacts with NHERF1 (via the PDZ domains) and NHERF2 (via the PDZ domains). In terms of processing, phosphorylated on serine residues by PKC; the phosphorylation disrupts interaction with carbonic anhydrase CA2 and reduces bicarbonate transport activity in a phorbol myristate acetate (PMA)-induced manner. Glycosylation at Asn-167 and Asn-172 positively regulates its chloride oxalate exchanger activity. As to expression, ubiquitous. Highest levels in kidney and pancreas. Lower expression in heart, skeletal muscle, liver and placenta. Also found in lung and brain. Ubiquitously expressed. Highest levels expressed in the kidney and pancreas. In terms of tissue distribution, expressed weakly in placenta, lung, liver and pancreas. As to expression, expressed in heart, brain, placenta, lung, liver, kidney, pancreas, spleen, thymus, prostate, testis and ovary.

It is found in the cell membrane. Its subcellular location is the apical cell membrane. The protein localises to the cytoplasmic vesicle membrane. It localises to the microsome. The protein resides in the basolateral cell membrane. It carries out the reaction 2 hydrogencarbonate(in) + chloride(out) = 2 hydrogencarbonate(out) + chloride(in). The catalysed reaction is oxalate(in) + chloride(out) = oxalate(out) + chloride(in). It catalyses the reaction oxalate(in) + formate(out) = oxalate(out) + formate(in). The enzyme catalyses oxalate(in) + sulfate(out) = oxalate(out) + sulfate(in). It carries out the reaction 2 hydrogencarbonate(out) + sulfate(in) = 2 hydrogencarbonate(in) + sulfate(out). Its activity is regulated as follows. Oxalate transport activity is inhibited by 4,4'-diisothiocyanatostilbene-2,2'-disulfonic acid (DIDS). Chloride, bicarbonate and sulfate transport activities are inhibited by 4,4'-diisothiocyanatostilbene-2,2'-disulfonic acid (DIDS). In terms of biological role, apical membrane anion-exchanger with wide epithelial distribution that plays a role as a component of the pH buffering system for maintaining acid-base homeostasis. Acts as a versatile DIDS-sensitive inorganic and organic anion transporter that mediates the uptake of monovalent anions like chloride, bicarbonate, formate and hydroxyl ion and divalent anions like sulfate and oxalate. Functions in multiple exchange modes involving pairs of these anions, which include chloride-bicarbonate, chloride-oxalate, oxalate-formate, oxalate-sulfate and chloride-formate exchange. Apical membrane chloride-bicarbonate exchanger that mediates luminal chloride absorption and bicarbonate secretion by the small intestinal brush border membrane and contributes to intracellular pH regulation in the duodenal upper villous epithelium during proton-coupled peptide absorption, possibly by providing a bicarbonate import pathway. Also mediates intestinal chloride absorption and oxalate secretion, thereby preventing hyperoxaluria and calcium oxalate urolithiasis. Transepithelial oxalate secretion, chloride-formate, chloride-oxalate and chloride-bicarbonate transport activities in the duodenum are inhibited by PKC activation in a calcium-independent manner. The apical membrane chloride-bicarbonate exchanger also provides a major route for fluid and bicarbonate secretion into the proximal tubules of the kidney as well as into the proximal part of the interlobular pancreatic ductal tree, where it mediates electrogenic chloride-bicarbonate exchange with a chloride-bicarbonate stoichiometry of 1:2, and hence will dilute and alkalinize protein-rich acinar secretion. Also mediates the transcellular sulfate absorption and oxalate secretion across the apical membrane in the duodenum and the formate ion efflux at the apical brush border of cells in the proximal tubules of kidney. Plays a role in sperm capacitation by increasing intracellular pH. Functionally, apical membrane chloride-bicarbonate exchanger. Its association with carbonic anhydrase CA2 forms a bicarbonate transport metabolon; hence maximizes the local concentration of bicarbonate at the transporter site. The chain is Solute carrier family 26 member 6 (SLC26A6) from Homo sapiens (Human).